We begin with the raw amino-acid sequence, 435 residues long: 3-phosphoshikimate 1-carboxyvinyltransferase (435 aa).

Residues lysine 25, serine 26, and arginine 30 each contribute to the 3-phosphoshikimate site. Lysine 25 is a binding site for phosphoenolpyruvate. Phosphoenolpyruvate is bound by residues glycine 99 and arginine 130. Serine 176, serine 177, glutamine 178, serine 204, aspartate 319, asparagine 342, and lysine 346 together coordinate 3-phosphoshikimate. Glutamine 178 provides a ligand contact to phosphoenolpyruvate. The Proton acceptor role is filled by aspartate 319. Positions 350, 394, and 419 each coordinate phosphoenolpyruvate.

The protein belongs to the EPSP synthase family. In terms of assembly, monomer.

The protein localises to the cytoplasm. The enzyme catalyses 3-phosphoshikimate + phosphoenolpyruvate = 5-O-(1-carboxyvinyl)-3-phosphoshikimate + phosphate. It participates in metabolic intermediate biosynthesis; chorismate biosynthesis; chorismate from D-erythrose 4-phosphate and phosphoenolpyruvate: step 6/7. In terms of biological role, catalyzes the transfer of the enolpyruvyl moiety of phosphoenolpyruvate (PEP) to the 5-hydroxyl of shikimate-3-phosphate (S3P) to produce enolpyruvyl shikimate-3-phosphate and inorganic phosphate. This Haemophilus ducreyi (strain 35000HP / ATCC 700724) protein is 3-phosphoshikimate 1-carboxyvinyltransferase.